The primary structure comprises 251 residues: Glucosamine-6-phosphate deaminase (251 aa).

Asp-73 acts as the Proton acceptor; for enolization step in catalysis. The active-site For ring-opening step is Asn-142. His-144 serves as the catalytic Proton acceptor; for ring-opening step. Residue Glu-149 is the For ring-opening step of the active site.

This sequence belongs to the glucosamine/galactosamine-6-phosphate isomerase family. NagB subfamily.

The enzyme catalyses alpha-D-glucosamine 6-phosphate + H2O = beta-D-fructose 6-phosphate + NH4(+). Its pathway is amino-sugar metabolism; N-acetylneuraminate degradation; D-fructose 6-phosphate from N-acetylneuraminate: step 5/5. Functionally, catalyzes the reversible isomerization-deamination of glucosamine 6-phosphate (GlcN6P) to form fructose 6-phosphate (Fru6P) and ammonium ion. The polypeptide is Glucosamine-6-phosphate deaminase (Rhodopirellula baltica (strain DSM 10527 / NCIMB 13988 / SH1)).